We begin with the raw amino-acid sequence, 217 residues long: Glyoxalase ElbB (217 aa).

Residue cysteine 135 is the Nucleophile of the active site.

It belongs to the peptidase C56 family. As to quaternary structure, homodimer.

The enzyme catalyses glyoxal + H2O = glycolate + H(+). Displays glyoxalase activity, catalyzing the conversion of glyoxal to glycolate. However, this apparent glyoxalase activity may reflect a protein deglycase activity, which could be the primary function of this protein like other DJ-1 superfamily members such as PARK7, YajL, YhbO and HchA. Is not able to use methylglyoxal as substrate. In Escherichia coli (strain K12), this protein is Glyoxalase ElbB.